Reading from the N-terminus, the 302-residue chain is tRNA dimethylallyltransferase (302 aa).

An ATP-binding site is contributed by 9 to 16 (GPTGTGKS). 11-16 (TGTGKS) serves as a coordination point for substrate.

Belongs to the IPP transferase family. Monomer. Mg(2+) is required as a cofactor.

The enzyme catalyses adenosine(37) in tRNA + dimethylallyl diphosphate = N(6)-dimethylallyladenosine(37) in tRNA + diphosphate. Its function is as follows. Catalyzes the transfer of a dimethylallyl group onto the adenine at position 37 in tRNAs that read codons beginning with uridine, leading to the formation of N6-(dimethylallyl)adenosine (i(6)A). The polypeptide is tRNA dimethylallyltransferase (Mycolicibacterium smegmatis (strain ATCC 700084 / mc(2)155) (Mycobacterium smegmatis)).